The following is a 157-amino-acid chain: MSKSCGNNLAAISVGISLLLLLVVCGIGCVWHWKHRVATRFTLPRFLQRRSSRRKVCTKTFLGPRIIGLRHEISVETQDHKSAVRGNNTHDNYENVEAGPPKAKGKTDKELYENTGQSNFEEHIYGNETSSDYYNFQKPRPSEVPQDEDIYILPDSY.

Residues 11–31 (AISVGISLLLLLVVCGIGCVW) form a helical membrane-spanning segment. A disordered region spans residues 78 to 108 (QDHKSAVRGNNTHDNYENVEAGPPKAKGKTD).

Belongs to the GAPT family. Interacts with GRB2. In terms of tissue distribution, highly expressed in spleen and PBL, detected at lower levels in thymus, and undetectable in all other tissues tested. Also expressed in various B-cell lines, monocytic cell line THP-1 and NK-like cell line YT, but not in T-cell line Jurkat or HeLa cells.

The protein localises to the cell membrane. Negatively regulates B-cell proliferation following stimulation through the B-cell receptor. May play an important role in maintenance of marginal zone (MZ) B-cells. This Homo sapiens (Human) protein is Protein GAPT (GAPT).